The sequence spans 198 residues: Large ribosomal subunit protein bL25 (198 aa).

The protein belongs to the bacterial ribosomal protein bL25 family. CTC subfamily. As to quaternary structure, part of the 50S ribosomal subunit; part of the 5S rRNA/L5/L18/L25 subcomplex. Contacts the 5S rRNA. Binds to the 5S rRNA independently of L5 and L18.

In terms of biological role, this is one of the proteins that binds to the 5S RNA in the ribosome where it forms part of the central protuberance. This Gloeothece citriformis (strain PCC 7424) (Cyanothece sp. (strain PCC 7424)) protein is Large ribosomal subunit protein bL25.